Reading from the N-terminus, the 562-residue chain is NAD-dependent malic enzyme (562 aa).

Tyrosine 101 (proton donor) is an active-site residue. Arginine 154 serves as a coordination point for NAD(+). Lysine 172 serves as the catalytic Proton acceptor. The a divalent metal cation site is built by glutamate 243, aspartate 244, and aspartate 267. NAD(+)-binding residues include aspartate 267 and asparagine 415.

It belongs to the malic enzymes family. As to quaternary structure, homotetramer. The cofactor is Mg(2+). Requires Mn(2+) as cofactor.

It carries out the reaction (S)-malate + NAD(+) = pyruvate + CO2 + NADH. It catalyses the reaction oxaloacetate + H(+) = pyruvate + CO2. This chain is NAD-dependent malic enzyme, found in Shewanella loihica (strain ATCC BAA-1088 / PV-4).